The sequence spans 465 residues: MIQLYNSMTGKKEPFKPLEEGKVKMYVCGPTVYNYIHIGNARPAIVFDTVRRYFTYRGYDVKYVSNFTDVDDKIIRTANELGEDYHALTKRFIEAYHADTGALNVQKADIHPLVTETMDDIIAFIEVLVKKGNAYASSGDVYFRTRSFKDYGQLSQQSIDELRSGARIEVGEKKEDPLDFVLWKAAKPGEPAWTSPWGEGRPGWHIECSAMAKKYLGDTIDIHAGGQDLKFPHHENEIAQSEACNSQKFANYWMHNGFLNIENEKMSKSLGNFLTVHEAIQAVDPMVLRFFMLSVQYRHPINYSRDLIDQAANGLARIRESVANVEHRLTMTADLGTATEKWLNRIEEIKQHFVTSMDDDFNTANAVTDLFDLSKEANLYLGEDQVAKEVLERFLAVFQELSTVLGVTLTIEKGLLDEEVEQLIRDRDTARKERDFARADAIRDQLRDQGILLEDTAQGMRWKRG.

Cysteine 28 is a binding site for Zn(2+). The 'HIGH' region motif lies at 30-40 (PTVYNYIHIGN). Cysteine 208, histidine 233, and glutamate 237 together coordinate Zn(2+). Positions 265-269 (KMSKS) match the 'KMSKS' region motif. Lysine 268 contacts ATP.

The protein belongs to the class-I aminoacyl-tRNA synthetase family. In terms of assembly, monomer. Zn(2+) is required as a cofactor.

Its subcellular location is the cytoplasm. The catalysed reaction is tRNA(Cys) + L-cysteine + ATP = L-cysteinyl-tRNA(Cys) + AMP + diphosphate. The chain is Cysteine--tRNA ligase from Exiguobacterium sibiricum (strain DSM 17290 / CCUG 55495 / CIP 109462 / JCM 13490 / 255-15).